Here is a 779-residue protein sequence, read N- to C-terminus: Ribosome-releasing factor 2, mitochondrial (779 aa).

Residues 68-353 (AKIRNIGIMA…AVTTYLPSPE (286 aa)) enclose the tr-type G domain. Residues 77 to 84 (AHIDAGKT), 141 to 145 (DTPGH), and 195 to 198 (NKMD) contribute to the GTP site.

Belongs to the TRAFAC class translation factor GTPase superfamily. Classic translation factor GTPase family. EF-G/EF-2 subfamily.

The protein resides in the mitochondrion. The catalysed reaction is GTP + H2O = GDP + phosphate + H(+). In terms of biological role, mitochondrial GTPase that mediates the disassembly of ribosomes from messenger RNA at the termination of mitochondrial protein biosynthesis. Acts in collaboration with MRRF. GTP hydrolysis follows the ribosome disassembly and probably occurs on the ribosome large subunit. Not involved in the GTP-dependent ribosomal translocation step during translation elongation. In Rattus norvegicus (Rat), this protein is Ribosome-releasing factor 2, mitochondrial (Gfm2).